Here is a 208-residue protein sequence, read N- to C-terminus: Large ribosomal subunit protein bL25 (208 aa).

The tract at residues 1-21 is disordered; sequence MSNEFSLNAEKRDVQGKGASR.

The protein belongs to the bacterial ribosomal protein bL25 family. CTC subfamily. As to quaternary structure, part of the 50S ribosomal subunit; part of the 5S rRNA/L5/L18/L25 subcomplex. Contacts the 5S rRNA. Binds to the 5S rRNA independently of L5 and L18.

Functionally, this is one of the proteins that binds to the 5S RNA in the ribosome where it forms part of the central protuberance. In Hahella chejuensis (strain KCTC 2396), this protein is Large ribosomal subunit protein bL25.